The sequence spans 338 residues: Tagatose 1,6-diphosphate aldolase (338 aa).

This sequence belongs to the aldolase LacD family.

It catalyses the reaction D-tagatofuranose 1,6-bisphosphate = D-glyceraldehyde 3-phosphate + dihydroxyacetone phosphate. It participates in carbohydrate metabolism; D-tagatose 6-phosphate degradation; D-glyceraldehyde 3-phosphate and glycerone phosphate from D-tagatose 6-phosphate: step 2/2. This Listeria monocytogenes serotype 4a (strain HCC23) protein is Tagatose 1,6-diphosphate aldolase.